The chain runs to 117 residues: Holo-[acyl-carrier-protein] synthase (117 aa).

Positions 6 and 55 each coordinate Mg(2+).

Belongs to the P-Pant transferase superfamily. AcpS family. Mg(2+) is required as a cofactor.

Its subcellular location is the cytoplasm. The enzyme catalyses apo-[ACP] + CoA = holo-[ACP] + adenosine 3',5'-bisphosphate + H(+). Its function is as follows. Transfers the 4'-phosphopantetheine moiety from coenzyme A to a Ser of acyl-carrier-protein. This chain is Holo-[acyl-carrier-protein] synthase, found in Chlorobaculum tepidum (strain ATCC 49652 / DSM 12025 / NBRC 103806 / TLS) (Chlorobium tepidum).